A 190-amino-acid polypeptide reads, in one-letter code: Transcription factor E (190 aa).

The HTH TFE/IIEalpha-type domain maps to 4 to 87 (KNKALLEIAK…YWHLETKRLP (84 aa)). Positions 170–190 (PSPKKEKKKTRAKAKRKTRKK) are disordered. Basic residues predominate over residues 174-190 (KEKKKTRAKAKRKTRKK).

Belongs to the TFE family. As to quaternary structure, monomer. Interaction with RNA polymerase subunits RpoF and RpoE is necessary for Tfe stimulatory transcription activity. Able to interact with Tbp and RNA polymerase in the absence of DNA promoter. Interacts both with the preinitiation and elongation complexes.

Its function is as follows. Transcription factor that plays a role in the activation of archaeal genes transcribed by RNA polymerase. Facilitates transcription initiation by enhancing TATA-box recognition by TATA-box-binding protein (Tbp), and transcription factor B (Tfb) and RNA polymerase recruitment. Not absolutely required for transcription in vitro, but particularly important in cases where Tbp or Tfb function is not optimal. It dynamically alters the nucleic acid-binding properties of RNA polymerases by stabilizing the initiation complex and destabilizing elongation complexes. Seems to translocate with the RNA polymerase following initiation and acts by binding to the non template strand of the transcription bubble in elongation complexes. The sequence is that of Transcription factor E from Pyrococcus abyssi (strain GE5 / Orsay).